Consider the following 403-residue polypeptide: MGKSNTIVLSNEKDIQLRIQQLEERKEKRKNVKLLFSPIKTTKYFLYILKDTLVSGIRYFQTRPFLLFFIALFASLTFIAVYVPGEHQKYMGKYSDLISDCIWWVGLGVLSSIGLGTGLHTFVLYLGPHIAKVTLAATEWNSVNFNVYGANSFIQPATAMIGGVSFWMILQKVQWAALFWGAGTAIGELPPYFVARTARLKGLKLEQEKKLKEQQEKPIDEKDQPKKGLLERLSEKVPALIGNLGFFGILAFASIPNPLFDLAGITCGHFLVPFWKFFGATFIGKAVVKAHIQACFVILAFNMETLTMVISFIEDKIPFLKNKIQPILEKERQKLNSTVSANSPKSLVGLAWDCVLFLMISYFLMSIVDSSVQEYLIEKDNKKIELLKSKLEKQQPKETKKTK.

Positions 7–33 (IVLSNEKDIQLRIQQLEERKEKRKNVK) form a coiled coil. Transmembrane regions (helical) follow at residues 65–85 (FLLFFIALFASLTFIAVYVPG), 102–122 (IWWVGLGVLSSIGLGTGLHTF), 150–170 (ANSFIQPATAMIGGVSFWMIL), 175–195 (WAALFWGAGTAIGELPPYFVA), 240–260 (LIGNLGFFGILAFASIPNPLF), 263–283 (AGITCGHFLVPFWKFFGATFI), 294–314 (ACFVILAFNMETLTMVISFIE), and 348–368 (VGLAWDCVLFLMISYFLMSIV).

It belongs to the VMP1 family.

It is found in the membrane. The protein resides in the endoplasmic reticulum. It catalyses the reaction a 1,2-diacyl-sn-glycero-3-phospho-L-serine(in) = a 1,2-diacyl-sn-glycero-3-phospho-L-serine(out). The catalysed reaction is cholesterol(in) = cholesterol(out). The enzyme catalyses a 1,2-diacyl-sn-glycero-3-phosphocholine(in) = a 1,2-diacyl-sn-glycero-3-phosphocholine(out). It carries out the reaction a 1,2-diacyl-sn-glycero-3-phosphoethanolamine(in) = a 1,2-diacyl-sn-glycero-3-phosphoethanolamine(out). Its function is as follows. Phospholipid scramblase involved in lipid homeostasis and membrane dynamics processes. Required for autophagosome formation: participates in early stages of autophagosome biogenesis at the endoplasmic reticulum (ER) membrane by reequilibrating the leaflets of the ER as lipids are extracted. In addition to autophagy, involved in other processes in which phospholipid scramblase activity is required. This is Vacuole membrane protein 1 homolog from Dictyostelium discoideum (Social amoeba).